An 86-amino-acid chain; its full sequence is Large ribosomal subunit protein bL27 (86 aa).

The tract at residues 1 to 23 (MAHKKAGGSTRNGRDSESKRLGV) is disordered.

Belongs to the bacterial ribosomal protein bL27 family.

The polypeptide is Large ribosomal subunit protein bL27 (Alkalilimnicola ehrlichii (strain ATCC BAA-1101 / DSM 17681 / MLHE-1)).